We begin with the raw amino-acid sequence, 124 residues long: Holo-[acyl-carrier-protein] synthase (124 aa).

Aspartate 8 and glutamate 58 together coordinate Mg(2+).

Belongs to the P-Pant transferase superfamily. AcpS family. Requires Mg(2+) as cofactor.

Its subcellular location is the cytoplasm. It catalyses the reaction apo-[ACP] + CoA = holo-[ACP] + adenosine 3',5'-bisphosphate + H(+). Transfers the 4'-phosphopantetheine moiety from coenzyme A to a Ser of acyl-carrier-protein. In Lacticaseibacillus casei (strain BL23) (Lactobacillus casei), this protein is Holo-[acyl-carrier-protein] synthase.